Reading from the N-terminus, the 599-residue chain is Cytochrome P450 monooxygenase ALT8 (599 aa).

The next 2 membrane-spanning stretches (helical) occupy residues 4-21 (LACV…VYLG) and 36-56 (ILFG…PAYF). A glycan (N-linked (GlcNAc...) asparagine) is linked at Asn127. Residues 495-504 (DDSSAASPSF) show a composition bias toward low complexity. A disordered region spans residues 495–522 (DDSSAASPSFGGSGKRKSQYTDTHKEPS). A heme-binding site is contributed by Cys539.

Belongs to the cytochrome P450 family. It depends on heme as a cofactor.

It is found in the membrane. It participates in secondary metabolite biosynthesis. Its function is as follows. Cytochrome P450 monooxygenase; part of the gene cluster that mediates the biosynthesis of the host-selective toxins (HSTs) AAL-toxins, sphinganine-analog mycotoxins responsible for Alternaria stem canker on tomato by the tomato pathotype. The biosynthesis starts with the polyketide synthase ALT1-catalyzed C-16 carbon chain assembly from one starter acetyl-CoA unit with malonyl-CoA extender units. ALT1 also selectively transfers methyl groups at the first and the third cycle of chain elongation for AAL toxin. The C-16 polyketide chain is released from the enzyme by a nucleophilic attack of a carbanion, which is derived from R-carbon of glycin by decarboxylation, on the carbonyl carbon of polyketide acyl chain. This step is probably catalyzed by a pyridoxal 5'-phosphate-dependent aminoacyl transferase ALT4. The respective functions of the other enzymes encoded by the cluster have still to be elucidated. The sphingosine N-acyltransferase-like protein ALT7 seems not to act as a resistance/self-tolerance factor against the toxin in the toxin biosynthetic gene cluster, contrary to what is expected. The sequence is that of Cytochrome P450 monooxygenase ALT8 from Alternaria alternata (Alternaria rot fungus).